The chain runs to 317 residues: Gamma-glutamyl hydrolase (317 aa).

A signal peptide spans 1-24 (MANLGYLLCLLGLLLCGLSSPGMS). A Gamma-glutamyl hydrolase domain is found at 25-317 (RPYNHGSERP…SSFQQAYMFD (293 aa)). An N-linked (GlcNAc...) (high mannose) asparagine glycan is attached at Asn100. Cys133 (nucleophile) is an active-site residue. 2 N-linked (GlcNAc...) (high mannose) asparagine glycosylation sites follow: Asn162 and Asn188. The N-linked (GlcNAc...) asparagine glycan is linked to Asn202. Residue His243 is the Proton donor of the active site. A glycan (N-linked (GlcNAc...) asparagine) is linked at Asn306.

The protein belongs to the peptidase C26 family. In terms of assembly, homodimer. As to expression, isoform I (more expressed than isoform II in all tissues) is highly expressed in salivary gland, followed by kidney, liver, lung, stomach and uterus, and weakly expressed in small intestine, brain and fetal liver. Also expressed at a lower level in thymus, spleen and skeletal muscle. Also expressed in tumors.

The protein resides in the secreted. Its subcellular location is the extracellular space. It is found in the lysosome. The protein localises to the melanosome. The enzyme catalyses (6S)-5,6,7,8-tetrahydrofolyl-(gamma-L-Glu)(n) + (n-1) H2O = (6S)-5,6,7,8-tetrahydrofolate + (n-1) L-glutamate. Functionally, hydrolyzes the polyglutamate sidechains of pteroylpolyglutamates. Progressively removes gamma-glutamyl residues from pteroylpoly-gamma-glutamate to yield pteroyl-alpha-glutamate (folic acid) and free glutamate. May play an important role in the bioavailability of dietary pteroylpolyglutamates and in the metabolism of pteroylpolyglutamates and antifolates. In Mus musculus (Mouse), this protein is Gamma-glutamyl hydrolase (Ggh).